A 451-amino-acid chain; its full sequence is Magnesium transporter MgtE (451 aa).

The Cytoplasmic portion of the chain corresponds to 1 to 285 (MVQNMTYDEL…TKAYVAAYRR (285 aa)). Mg(2+) contacts are provided by D64 and D96. CBS domains lie at 140 to 203 (MTNR…VQDL) and 204 to 260 (MFTR…EADE). Mg(2+)-binding residues include E218, D228, D249, D252, E257, E260, and D261. Residues 286–306 (LPWLILLLFIGLISGSIISYF) form a helical membrane-spanning segment. Residues 307 to 311 (EDALK) are Extracellular-facing. The helical transmembrane segment at 312 to 332 (QVVALAFFMPMVSGMTGNTGT) threads the bilayer. The Cytoplasmic segment spans residues 333-371 (QSLAVVIRGLSKEEMNKKTIVRLIFREFRTSIFIGAVCS). Transmembrane regions (helical) follow at residues 372-392 (VLIAIVSIIWQGNALLGFVVA) and 393-413 (SSLFLTLIIGTMSGTIIPIIL). Residues 414–427 (HKLKVDPAIASGPL) are Cytoplasmic-facing. Mg(2+) contacts are provided by D419 and D433. Residues 428 to 448 (ITTLNDILSLLIYFGIATAFI) form a helical membrane-spanning segment. The Extracellular segment spans residues 449–451 (HSL).

It belongs to the SLC41A transporter family. As to quaternary structure, homodimer.

The protein localises to the cell membrane. It carries out the reaction Mg(2+)(in) = Mg(2+)(out). Binds cyclic di-AMP (c-di-AMP), which may regulate the transporter activity. Acts as a magnesium transporter. MgtE is the dominant transporter under rich-medium growth conditions, and it may provide the primary route of magnesium import in B.subtilis, while the other putative transport proteins are likely to be utilized for more-specialized growth conditions. The chain is Magnesium transporter MgtE from Bacillus subtilis (strain 168).